The sequence spans 224 residues: MNNFVITVDGPSGVGKGTLSAALANKLGFALLDSGAIYRISALAALRQGIAFDDEDELAKLIPTLAIEFISNNDEVTAILNGENVTTQIRSAEAGQNASKIAIFPKVRAALLQRQRDFSSPMGLIADGRDMGTIVFPDAQVKFFLEASAEERTKRRVKQLQEKGFNANFGEILAEIKTRDLRDRTRAVVPLVPAKDALLLDSTHLSIEEVISQALAHIAKFKKF.

ATP is bound at residue 10–18 (GPSGVGKGT).

The protein belongs to the cytidylate kinase family. Type 1 subfamily.

The protein resides in the cytoplasm. It catalyses the reaction CMP + ATP = CDP + ADP. It carries out the reaction dCMP + ATP = dCDP + ADP. This Haemophilus ducreyi (strain 35000HP / ATCC 700724) protein is Cytidylate kinase.